The primary structure comprises 252 residues: Aspartate/glutamate leucyltransferase (252 aa).

The protein belongs to the R-transferase family. Bpt subfamily.

It localises to the cytoplasm. The enzyme catalyses N-terminal L-glutamyl-[protein] + L-leucyl-tRNA(Leu) = N-terminal L-leucyl-L-glutamyl-[protein] + tRNA(Leu) + H(+). It catalyses the reaction N-terminal L-aspartyl-[protein] + L-leucyl-tRNA(Leu) = N-terminal L-leucyl-L-aspartyl-[protein] + tRNA(Leu) + H(+). Functions in the N-end rule pathway of protein degradation where it conjugates Leu from its aminoacyl-tRNA to the N-termini of proteins containing an N-terminal aspartate or glutamate. This is Aspartate/glutamate leucyltransferase from Hyphomonas neptunium (strain ATCC 15444).